Here is a 669-residue protein sequence, read N- to C-terminus: Gametogenetin-binding protein 2 (669 aa).

Disordered stretches follow at residues 375 to 421 and 452 to 475; these read QEKK…GNPC and PHSNVSDCGYSSSLEGSEPGSQEG. The span at 376-388 shows a compositional bias: basic residues; that stretch reads EKKRQKKNRKKNK. The segment covering 398–408 has biased composition (polar residues); it reads ETKSANPSQKN.

It localises to the cytoplasm. Functionally, may be involved in spermatogenesis. This Xenopus tropicalis (Western clawed frog) protein is Gametogenetin-binding protein 2 (ggnbp2).